Here is a 358-residue protein sequence, read N- to C-terminus: Gibberellin receptor GID1B (358 aa).

Alanine 2 carries the post-translational modification N-acetylalanine. Positions histidine 113–glycine 115 match the Involved in the stabilization of the negatively charged intermediate by the formation of the oxyanion hole motif. Gibberellin A4 contacts are provided by residues glycine 115 to serine 116, tyrosine 127, and serine 191. The gibberellin A3 site is built by serine 116, tyrosine 127, serine 191, and phenylalanine 238. Serine 191 is an active-site residue. The active site involves aspartate 289. Position 320 (glycine 320) interacts with gibberellin A4. Glycine 320 contributes to the gibberellin A3 binding site.

Belongs to the 'GDXG' lipolytic enzyme family. Interacts with the DELLA proteins GAI, RGA, RGL1, RGL2 and RGL3 in a GA-dependent manner. Widely expressed.

It localises to the nucleus. Functions as a soluble gibberellin (GA) receptor. GA is an essential hormone that regulates growth and development in plants. Binds with high affinity the biologically active gibberellin GA4, but has no affinity for the biologically inactive GAs. In response to GA, interacts with specific DELLA proteins, known as repressors of GA-induced growth, and targets them for degradation via proteasome. Seems to be required for GA signaling that controls root growth, seed germination and flower development. May function as a dominant GA receptor at low GA concentrations in germination. Partially redundant with GID1A and GID1C. The chain is Gibberellin receptor GID1B (GID1B) from Arabidopsis thaliana (Mouse-ear cress).